The following is a 319-amino-acid chain: Cytochrome f (319 aa).

A signal peptide spans 1-35 (MFQQMQKISLKLLKTTFLFLFATFILVGLPSTSQA). 4 residues coordinate heme: Tyr-36, Cys-56, Cys-59, and His-60. Residues 285–305 (IQGLIAFFISVIIAQTFLVLK) traverse the membrane as a helical segment.

Belongs to the cytochrome f family. The 4 large subunits of the cytochrome b6-f complex are cytochrome b6, subunit IV (17 kDa polypeptide, petD), cytochrome f and the Rieske protein, while the 4 small subunits are PetG, PetL, PetM and PetN. The complex functions as a dimer. Requires heme as cofactor.

It is found in the plastid. It localises to the chloroplast thylakoid membrane. Functionally, component of the cytochrome b6-f complex, which mediates electron transfer between photosystem II (PSII) and photosystem I (PSI), cyclic electron flow around PSI, and state transitions. This chain is Cytochrome f, found in Chlorokybus atmophyticus (Soil alga).